A 432-amino-acid polypeptide reads, in one-letter code: Histidine--tRNA ligase (432 aa).

Belongs to the class-II aminoacyl-tRNA synthetase family. Homodimer.

The protein localises to the cytoplasm. The enzyme catalyses tRNA(His) + L-histidine + ATP = L-histidyl-tRNA(His) + AMP + diphosphate + H(+). This is Histidine--tRNA ligase from Symbiobacterium thermophilum (strain DSM 24528 / JCM 14929 / IAM 14863 / T).